The following is a 495-amino-acid chain: IQ domain-containing protein IQM5 (495 aa).

The disordered stretch occupies residues 89-122 (ENRGGEEEDERGSSPKRRNRGNLTALSLPAPTPF). One can recognise an IQ domain in the interval 131 to 160 (LDAAAVTLQKVYKSYRTRRNLADCAVVVEE).

As to expression, expressed in roots, rosette and cauline leaves, and at lower levels in stems, flowers and siliques.

It is found in the cytoplasm. The protein resides in the nucleus. Its function is as follows. May be involved in biotic and abiotic stress responses. This chain is IQ domain-containing protein IQM5, found in Arabidopsis thaliana (Mouse-ear cress).